The following is a 153-amino-acid chain: D-aminoacyl-tRNA deacylase (153 aa).

The short motif at 142–143 (GP) is the Gly-cisPro motif, important for rejection of L-amino acids element.

The protein belongs to the DTD family. In terms of assembly, homodimer.

The protein localises to the cytoplasm. It catalyses the reaction glycyl-tRNA(Ala) + H2O = tRNA(Ala) + glycine + H(+). The catalysed reaction is a D-aminoacyl-tRNA + H2O = a tRNA + a D-alpha-amino acid + H(+). Its function is as follows. An aminoacyl-tRNA editing enzyme that deacylates mischarged D-aminoacyl-tRNAs. Also deacylates mischarged glycyl-tRNA(Ala), protecting cells against glycine mischarging by AlaRS. Acts via tRNA-based rather than protein-based catalysis; rejects L-amino acids rather than detecting D-amino acids in the active site. By recycling D-aminoacyl-tRNA to D-amino acids and free tRNA molecules, this enzyme counteracts the toxicity associated with the formation of D-aminoacyl-tRNA entities in vivo and helps enforce protein L-homochirality. The chain is D-aminoacyl-tRNA deacylase from Acidovorax ebreus (strain TPSY) (Diaphorobacter sp. (strain TPSY)).